The following is a 357-amino-acid chain: Inositol-tetrakisphosphate 1-kinase 3 (357 aa).

Positions 56 and 98 each coordinate 1D-myo-inositol 1,3,4-trisphosphate. Residues R133 and K183 each contribute to the ATP site. 1D-myo-inositol 1,3,4-trisphosphate is bound by residues H190 and K222. Residues 211 to 222 (QEFVNHGGVLFK), S237, and S262 contribute to the ATP site. Mg(2+) contacts are provided by D302, D317, and N319. N319 lines the 1D-myo-inositol 1,3,4-trisphosphate pocket.

This sequence belongs to the ITPK1 family. As to quaternary structure, monomer. Requires Mg(2+) as cofactor.

It catalyses the reaction 1D-myo-inositol 3,4,5,6-tetrakisphosphate + ATP = 1D-myo-inositol 1,3,4,5,6-pentakisphosphate + ADP + H(+). The catalysed reaction is 1D-myo-inositol 1,3,4-trisphosphate + ATP = 1D-myo-inositol 1,3,4,5-tetrakisphosphate + ADP + H(+). It carries out the reaction 1D-myo-inositol 1,3,4-trisphosphate + ATP = 1D-myo-inositol 1,3,4,6-tetrakisphosphate + ADP + H(+). Kinase that can phosphorylate various inositol polyphosphate such as Ins(3,4,5,6)P4 or Ins(1,3,4)P3 and participates in phytic acid biosynthesis in developing seeds. Phytic acid is the primary storage form of phosphorus in cereal grains and other plant seeds. This is Inositol-tetrakisphosphate 1-kinase 3 (ITPK3) from Oryza sativa subsp. indica (Rice).